A 360-amino-acid polypeptide reads, in one-letter code: MSDNSFGKLFRVTTWGESHGPAIGCVIDGCPPRLKLSEEDIQPWLDRRRPGQSRFTTQRREPDQVRILSGVFEGQTTGTPISLMIENTDQRSKDYGDIATRYRPGHADIAYDMKYGIRDYRGGGRSSARETAMRVAAGAVARVLLRTLVGEGVKIRAALTGIGGQTIDPSRWDWDEVERNPLWCPDAESVGPWEALLDSIRKDGSSIGATVEVVAEGLPAGLGAPVYGKLDADLAGAMMGINGVKGVEIGDGFAVAALRGEQNADPIAPGPQFASNHAGGILGGISTGQPIVARFAIKPTSSILTPVPSITRDGESVEVMTKGRHDPCIGIRAVPVAEAMMACVLADHLLRDHAQCGWGR.

Residues Arg-48 and Arg-54 each coordinate NADP(+). Residues 125–127 (RSS), 242–243 (NG), Gly-283, 298–302 (KPTSS), and Arg-324 each bind FMN.

The protein belongs to the chorismate synthase family. As to quaternary structure, homotetramer. FMNH2 serves as cofactor.

The enzyme catalyses 5-O-(1-carboxyvinyl)-3-phosphoshikimate = chorismate + phosphate. The protein operates within metabolic intermediate biosynthesis; chorismate biosynthesis; chorismate from D-erythrose 4-phosphate and phosphoenolpyruvate: step 7/7. Catalyzes the anti-1,4-elimination of the C-3 phosphate and the C-6 proR hydrogen from 5-enolpyruvylshikimate-3-phosphate (EPSP) to yield chorismate, which is the branch point compound that serves as the starting substrate for the three terminal pathways of aromatic amino acid biosynthesis. This reaction introduces a second double bond into the aromatic ring system. The sequence is that of Chorismate synthase from Gluconobacter oxydans (strain 621H) (Gluconobacter suboxydans).